The primary structure comprises 37 residues: Pi-theraphotoxin-Hm3a (37 aa).

Cystine bridges form between Cys3/Cys18, Cys10/Cys23, and Cys17/Cys33.

The protein belongs to the psalmotoxin-1 family. In terms of tissue distribution, expressed by the venom gland.

It is found in the secreted. Its function is as follows. This toxin acts on different isoforms of acid-sensing ion channel ASIC1 in a similar manner to psalmotoxin-1 (AC P60514). On ASIC1a homotrimer, it provokes a pH-dependent inhibition (IC(50)=39.7 nM on human and IC(50)=1.3 nM on rat channels), whereas it potentiates ASIC1b homotrimer and ASIC1a-ASIC1b heterotrimer (EC(50)=178.1 nM on human ASIC1b, EC(50)=46.5 nM on rat ASIC1b and EC(50)=17.4 nM on rat ASIC1a-ASIC1b channels). On rat ASIC1a, it acts by inhibiting channel currents by shifting the pH of half-maximal effect (pH(50)) of steady-state desensitization and activation to more alkaline values. This Heteroscodra maculata (Togo starburst tarantula) protein is Pi-theraphotoxin-Hm3a.